We begin with the raw amino-acid sequence, 196 residues long: Peptidyl-tRNA hydrolase (196 aa).

TRNA is bound at residue tyrosine 16. Histidine 21 functions as the Proton acceptor in the catalytic mechanism. Positions 67, 69, and 115 each coordinate tRNA.

It belongs to the PTH family. As to quaternary structure, monomer.

The protein resides in the cytoplasm. It carries out the reaction an N-acyl-L-alpha-aminoacyl-tRNA + H2O = an N-acyl-L-amino acid + a tRNA + H(+). Its function is as follows. Hydrolyzes ribosome-free peptidyl-tRNAs (with 1 or more amino acids incorporated), which drop off the ribosome during protein synthesis, or as a result of ribosome stalling. In terms of biological role, catalyzes the release of premature peptidyl moieties from peptidyl-tRNA molecules trapped in stalled 50S ribosomal subunits, and thus maintains levels of free tRNAs and 50S ribosomes. The polypeptide is Peptidyl-tRNA hydrolase (Edwardsiella ictaluri (strain 93-146)).